A 504-amino-acid chain; its full sequence is D-alanine--D-alanyl carrier protein ligase (504 aa).

152–153 (TS) is an ATP binding site. Residue aspartate 197 participates in D-alanine binding. 292-297 (NTYGPT) provides a ligand contact to ATP. Position 301 (valine 301) interacts with D-alanine. ATP is bound by residues aspartate 383, 394 to 397 (YNGR), and lysine 492. Residue lysine 492 participates in D-alanine binding.

This sequence belongs to the ATP-dependent AMP-binding enzyme family. DltA subfamily.

The protein resides in the cytoplasm. It catalyses the reaction holo-[D-alanyl-carrier protein] + D-alanine + ATP = D-alanyl-[D-alanyl-carrier protein] + AMP + diphosphate. Its pathway is cell wall biogenesis; lipoteichoic acid biosynthesis. Catalyzes the first step in the D-alanylation of lipoteichoic acid (LTA), the activation of D-alanine and its transfer onto the D-alanyl carrier protein (Dcp) DltC. In an ATP-dependent two-step reaction, forms a high energy D-alanyl-AMP intermediate, followed by transfer of the D-alanyl residue as a thiol ester to the phosphopantheinyl prosthetic group of the Dcp. D-alanylation of LTA plays an important role in modulating the properties of the cell wall in Gram-positive bacteria, influencing the net charge of the cell wall. This is D-alanine--D-alanyl carrier protein ligase from Bacillus cereus (strain ATCC 10987 / NRS 248).